Reading from the N-terminus, the 126-residue chain is MASIETLVEEIGKLSLTEASELVKALEEKFGVSAAPAVIAGGMAAAPAGDAAAQEEKTEFDVELKAAGANKINVIKVVRSITGLGLKEAKEVVDGAPKVVKEAVSKEEAEKIAKELKDAGAEVELK.

This sequence belongs to the bacterial ribosomal protein bL12 family. Homodimer. Part of the ribosomal stalk of the 50S ribosomal subunit. Forms a multimeric L10(L12)X complex, where L10 forms an elongated spine to which 2 to 4 L12 dimers bind in a sequential fashion. Binds GTP-bound translation factors.

Forms part of the ribosomal stalk which helps the ribosome interact with GTP-bound translation factors. Is thus essential for accurate translation. The chain is Large ribosomal subunit protein bL12 from Prosthecochloris aestuarii (strain DSM 271 / SK 413).